The sequence spans 405 residues: Dematin (405 aa).

Disordered stretches follow at residues 1 to 30 (MERL…PSSI), 79 to 158 (PRSR…GSPQ), 173 to 192 (FPAA…TDYW), and 203 to 332 (TEWR…DRGN). The span at 11–29 (SPGSVSPSRDSSVPGSPSS) shows a compositional bias: low complexity. Phosphoserine is present on residues Ser-16, Ser-18, Ser-26, Ser-92, Ser-96, Ser-105, Ser-110, Ser-113, and Ser-156. Polar residues predominate over residues 108–123 (IISQASAPRTTGTPRT). The segment covering 216-227 (EEEEEEEDDDSG) has biased composition (acidic residues). Residues 224 to 308 (DDSGEEMKAL…SRLQSTEFSP (85 aa)) form an interaction with RASGRF2 region. Position 226 is a phosphoserine (Ser-226). Composition is skewed to basic and acidic residues over residues 228-242 (EEMK…EELS) and 252-261 (ILKEEMEKSL). Phosphoserine is present on residues Ser-269, Ser-279, Ser-289, Ser-303, Ser-315, Ser-333, Ser-372, and Ser-383. Over residues 276 to 322 (FHTSLHQGTSKSSSLPAYGRTTLSRLQSTEFSPSGSETGSPGLQNGE) the composition is skewed to polar residues. An HP domain is found at 337-405 (VLEQKIYPYE…NELKKKASLF (69 aa)). Ser-403 is subject to Phosphoserine; by PKA.

It belongs to the villin/gelsolin family. Monomeric (isoform 2); under reducing conditions. Self-associates. Exists under oxidizing condition as a trimer of two isoforms 2 and isoform 1 linked by disulfide bonds. Found in a complex with DMTN, F-actin and spectrin. Found in a complex with ADD2, DMTN and SLC2A1. Interacts with F-actin, ITPKB, RASGRF2 and spectrin. Isoform 2 interacts with SLC2A1 (via C-terminus cytoplasmic region). Isoform 1 and isoform 2 interact (phosphorylated form) with plasmodium berghei 14-3-3 protein; the interaction occurs in a PKA-dependent manner. Post-translationally, phosphorylated. Phosphorylation at Ser-403 by PKA causes the C-terminal headpiece domain to associate with the N-terminal core domain, and leads to the inhibition of its actin bundling activity. The N-terminus is blocked. In terms of tissue distribution, expressed in platelets (at protein level). Expressed in heart, brain, lung, skeletal muscle, and kidney.

Its subcellular location is the cytoplasm. It is found in the cytosol. The protein localises to the perinuclear region. The protein resides in the cytoskeleton. It localises to the cell membrane. Its subcellular location is the membrane. It is found in the endomembrane system. The protein localises to the cell projection. In terms of biological role, membrane-cytoskeleton-associated protein with F-actin-binding activity that induces F-actin bundles formation and stabilization. Its F-actin-bundling activity is reversibly regulated upon its phosphorylation by the cAMP-dependent protein kinase A (PKA). Binds to the erythrocyte membrane glucose transporter-1 SLC2A1/GLUT1, and hence stabilizes and attaches the spectrin-actin network to the erythrocytic plasma membrane. Plays a role in maintaining the functional integrity of PKA-activated erythrocyte shape and the membrane mechanical properties. Also plays a role as a modulator of actin dynamics in fibroblasts; acts as a negative regulator of the RhoA activation pathway. In platelets, functions as a regulator of internal calcium mobilization across the dense tubular system that affects platelet granule secretion pathways and aggregation. Also required for the formation of a diverse set of cell protrusions, such as filopodia and lamellipodia, necessary for platelet cell spreading, motility and migration. Acts as a tumor suppressor and inhibits malignant cell transformation. This is Dematin (DMTN) from Homo sapiens (Human).